The primary structure comprises 128 residues: Large ribosomal subunit protein bL17 (128 aa).

The protein belongs to the bacterial ribosomal protein bL17 family. As to quaternary structure, part of the 50S ribosomal subunit. Contacts protein L32.

The polypeptide is Large ribosomal subunit protein bL17 (Petrotoga mobilis (strain DSM 10674 / SJ95)).